The chain runs to 357 residues: Dihydroflavonol 4-reductase (357 aa).

Residues Lys49 and Tyr168 each contribute to the NADP(+) site.

The protein belongs to the NAD(P)-dependent epimerase/dehydratase family. Dihydroflavonol-4-reductase subfamily.

The catalysed reaction is a (2R,3S,4S)-leucoanthocyanidin + NADP(+) = a (2R,3R)-dihydroflavonol + NADPH + H(+). It catalyses the reaction (2S)-flavan-4-ol + NADP(+) = (2S)-flavanone + NADPH + H(+). Its pathway is pigment biosynthesis; anthocyanin biosynthesis. Functionally, bifunctional enzyme involved in flavonoid metabolism. The chain is Dihydroflavonol 4-reductase (A1) from Zea mays (Maize).